The following is a 261-amino-acid chain: Cytochrome c oxidase subunit 3 (261 aa).

At 1–15 the chain is on the mitochondrial matrix side; it reads MTHQTHAYHMVDPSP. The chain crosses the membrane as a helical span at residues 16–34; the sequence is WPLTGALSALLMTSGLTMW. The Mitochondrial intermembrane portion of the chain corresponds to 35–40; it reads FHYHSV. Residues 41-66 form a helical membrane-spanning segment; the sequence is TLLLLGLTTNILTMFQWWRDVVREGT. Over 67–72 the chain is Mitochondrial matrix; sequence FQGHHT. A helical membrane pass occupies residues 73 to 105; it reads PVVQESLRYGMILFITSEVLFFTGFFWAFYHSS. Residues 106 to 128 are Mitochondrial intermembrane-facing; sequence LAPTPELGSYWPPVGVYPLNPLE. Residues 129-152 traverse the membrane as a helical segment; that stretch reads VPLLNTSVLLASGVTITWAHHSLM. Over 153–155 the chain is Mitochondrial matrix; sequence EGN. The helical transmembrane segment at 156-183 threads the bilayer; sequence RKNMLQALLITILLGVYFTLLQMFEYYE. The Mitochondrial intermembrane segment spans residues 184–190; sequence ASFTISD. A helical transmembrane segment spans residues 191-223; that stretch reads GIYGSTFFVTTGFHGLHVIIGSTFLLTCFIRQL. Residues 224–232 are Mitochondrial matrix-facing; it reads KFHFTSNHH. Residues 233 to 256 form a helical membrane-spanning segment; that stretch reads FGFEAAAWYWHFVDVVWLFLYLSI. Residues 257–261 are Mitochondrial intermembrane-facing; it reads YWWGS.

The protein belongs to the cytochrome c oxidase subunit 3 family. As to quaternary structure, component of the cytochrome c oxidase (complex IV, CIV), a multisubunit enzyme composed of 14 subunits. The complex is composed of a catalytic core of 3 subunits MT-CO1, MT-CO2 and MT-CO3, encoded in the mitochondrial DNA, and 11 supernumerary subunits COX4I, COX5A, COX5B, COX6A, COX6B, COX6C, COX7A, COX7B, COX7C, COX8 and NDUFA4, which are encoded in the nuclear genome. The complex exists as a monomer or a dimer and forms supercomplexes (SCs) in the inner mitochondrial membrane with NADH-ubiquinone oxidoreductase (complex I, CI) and ubiquinol-cytochrome c oxidoreductase (cytochrome b-c1 complex, complex III, CIII), resulting in different assemblies (supercomplex SCI(1)III(2)IV(1) and megacomplex MCI(2)III(2)IV(2)).

Its subcellular location is the mitochondrion inner membrane. It carries out the reaction 4 Fe(II)-[cytochrome c] + O2 + 8 H(+)(in) = 4 Fe(III)-[cytochrome c] + 2 H2O + 4 H(+)(out). In terms of biological role, component of the cytochrome c oxidase, the last enzyme in the mitochondrial electron transport chain which drives oxidative phosphorylation. The respiratory chain contains 3 multisubunit complexes succinate dehydrogenase (complex II, CII), ubiquinol-cytochrome c oxidoreductase (cytochrome b-c1 complex, complex III, CIII) and cytochrome c oxidase (complex IV, CIV), that cooperate to transfer electrons derived from NADH and succinate to molecular oxygen, creating an electrochemical gradient over the inner membrane that drives transmembrane transport and the ATP synthase. Cytochrome c oxidase is the component of the respiratory chain that catalyzes the reduction of oxygen to water. Electrons originating from reduced cytochrome c in the intermembrane space (IMS) are transferred via the dinuclear copper A center (CU(A)) of subunit 2 and heme A of subunit 1 to the active site in subunit 1, a binuclear center (BNC) formed by heme A3 and copper B (CU(B)). The BNC reduces molecular oxygen to 2 water molecules using 4 electrons from cytochrome c in the IMS and 4 protons from the mitochondrial matrix. This Loxodonta africana (African elephant) protein is Cytochrome c oxidase subunit 3 (MT-CO3).